A 136-amino-acid chain; its full sequence is HTH-type transcriptional regulator CysB (136 aa).

An HTH lysR-type domain is found at 1-59 (MDVRQLRSLVTLVEVRFSVSRAAECLHLVQSAVTQHLKQLEAELGTRLFVRHGKRLVGL). A DNA-binding region (H-T-H motif) is located at residues 19–38 (VSRAAECLHLVQSAVTQHLK).

This sequence belongs to the LysR transcriptional regulatory family.

Its function is as follows. This protein is a positive regulator of gene expression for the cysteine regulon. This Thiocapsa roseopersicina protein is HTH-type transcriptional regulator CysB (cysB).